Reading from the N-terminus, the 242-residue chain is MNYLGDYCDVYLTHDSMSVRKAHNSGRNHLRNVVEYYQEIGHEKAQSVIDSITNSYAAEGQASSNPMLQQPGAPGAYPPPAFGFPGRPGMLPPPPPFGMPGAPPGAPPGGMIPLPGGRGMPPFPPPPPFGGTSGGPPMPGDLPPPPLPNMPSGNIPFPPPNGFPPNFQFPPPGAAGFPPPPIPGQGQTQSTSPGPGATGTPVPPPGFPLPGAPPLGQSAGITPPPGVPQKPASSPGPSQEGK.

The Matrin-type; degenerate zinc finger occupies Tyr3–Glu35. Positions Gly60–Lys242 are disordered. 4 stretches are compositionally biased toward pro residues: residues Met90–Pro107, Pro136–Asn149, Pro156–Pro183, and Pro201–Pro213. Polar residues predominate over residues Pro231 to Lys242.

It belongs to the U1 small nuclear ribonucleoprotein C family. In terms of assembly, U1 snRNP is composed of the 7 core Sm proteins B/B', D1, D2, D3, E, F and G that assemble in a heptameric protein ring on the Sm site of the small nuclear RNA to form the core snRNP, and at least 3 U1 snRNP-specific proteins U1-70K, U1-A and U1-C. U1-C interacts with U1 snRNA and the 5' splice-site region of the pre-mRNA.

The protein resides in the nucleus. In terms of biological role, component of the spliceosomal U1 snRNP, which is essential for recognition of the pre-mRNA 5' splice-site and the subsequent assembly of the spliceosome. U1-C is directly involved in initial 5' splice-site recognition for both constitutive and regulated alternative splicing. The interaction with the 5' splice-site seems to precede base-pairing between the pre-mRNA and the U1 snRNA. Stimulates commitment or early (E) complex formation by stabilizing the base pairing of the 5' end of the U1 snRNA and the 5' splice-site region. The polypeptide is U1 small nuclear ribonucleoprotein C (Ajellomyces capsulatus (strain G186AR / H82 / ATCC MYA-2454 / RMSCC 2432) (Darling's disease fungus)).